Consider the following 357-residue polypeptide: Phenylalanine--tRNA ligase alpha subunit (357 aa).

Glu258 provides a ligand contact to Mg(2+).

The protein belongs to the class-II aminoacyl-tRNA synthetase family. Phe-tRNA synthetase alpha subunit type 1 subfamily. As to quaternary structure, tetramer of two alpha and two beta subunits. The cofactor is Mg(2+).

Its subcellular location is the cytoplasm. It carries out the reaction tRNA(Phe) + L-phenylalanine + ATP = L-phenylalanyl-tRNA(Phe) + AMP + diphosphate + H(+). The chain is Phenylalanine--tRNA ligase alpha subunit from Caulobacter vibrioides (strain ATCC 19089 / CIP 103742 / CB 15) (Caulobacter crescentus).